Consider the following 101-residue polypeptide: Rho GTPase-activating protein 39 (101 aa).

The Rho-GAP domain occupies 1–96 (YEQCIAHYES…VLIQHLDTSF (96 aa)).

In terms of tissue distribution, preoptic area and testis.

This is Rho GTPase-activating protein 39 (Arhgap39) from Rattus norvegicus (Rat).